Reading from the N-terminus, the 99-residue chain is Protein Tat (99 aa).

An interaction with human CREBBP region spans residues 1 to 24 (MDPVDPKLEPWNHPGSQPQTACNN). Residues 1 to 48 (MDPVDPKLEPWNHPGSQPQTACNNCYCKKCCYHCQMCFLKKGLGISYG) are transactivation. Positions 22, 25, and 27 each coordinate Zn(2+). Positions 22-37 (CNNCYCKKCCYHCQMC) are cysteine-rich. Lysine 28 carries the N6-acetyllysine; by host PCAF modification. Residues cysteine 30, histidine 33, cysteine 34, and cysteine 37 each contribute to the Zn(2+) site. A core region spans residues 38–48 (FLKKGLGISYG). Over residues 48–58 (GRKKRSQRHRT) the composition is skewed to basic residues. A disordered region spans residues 48-99 (GRKKRSQRHRTPASLQDHQNSISKQPLSRTHGDPTGPKEQKKEVASKTETDP). Positions 49-57 (RKKRSQRHR) match the Nuclear localization signal, RNA-binding (TAR), and protein transduction motif. Residues 49–86 (RKKRSQRHRTPASLQDHQNSISKQPLSRTHGDPTGPKE) form an interaction with the host capping enzyme RNGTT region. Residues lysine 50 and lysine 51 each carry the N6-acetyllysine; by host EP300 and GCN5L2 modification. An Asymmetric dimethylarginine; by host PRMT6 modification is found at arginine 52. Residues 60–75 (ASLQDHQNSISKQPLS) show a composition bias toward polar residues. Residue lysine 71 forms a Glycyl lysine isopeptide (Lys-Gly) (interchain with G-Cter in ubiquitin) linkage. A compositionally biased stretch (basic and acidic residues) spans 77–99 (THGDPTGPKEQKKEVASKTETDP).

Belongs to the lentiviruses Tat family. Interacts with host CCNT1. Associates with the P-TEFb complex composed at least of Tat, P-TEFb (CDK9 and CCNT1), TAR RNA, RNA Pol II. Recruits the HATs CREBBP, TAF1/TFIID, EP300, PCAF and GCN5L2. Interacts with host KAT5/Tip60; this interaction targets the latter to degradation. Interacts with the host deacetylase SIRT1. Interacts with host capping enzyme RNGTT; this interaction stimulates RNGTT. Binds to host KDR, and to the host integrins ITGAV/ITGB3 and ITGA5/ITGB1. Interacts with host KPNB1/importin beta-1 without previous binding to KPNA1/importin alpha-1. Interacts with EIF2AK2. Interacts with host nucleosome assembly protein NAP1L1; this interaction may be required for the transport of Tat within the nucleus, since the two proteins interact at the nuclear rim. Interacts with host C1QBP/SF2P32; this interaction involves lysine-acetylated Tat. Interacts with the host chemokine receptors CCR2, CCR3 and CXCR4. Interacts with host DPP4/CD26; this interaction may trigger an anti-proliferative effect. Interacts with host LDLR. Interacts with the host extracellular matrix metalloproteinase MMP1. Interacts with host PRMT6; this interaction mediates Tat's methylation. Interacts with, and is ubiquitinated by MDM2/Hdm2. Interacts with host PSMC3 and HTATIP2. Interacts with STAB1; this interaction may overcome SATB1-mediated repression of IL2 and IL2RA (interleukin) in T cells by binding to the same domain than HDAC1. Interacts (when acetylated) with human CDK13, thereby increasing HIV-1 mRNA splicing and promoting the production of the doubly spliced HIV-1 protein Nef. Interacts with host TBP; this interaction modulates the activity of transcriptional pre-initiation complex. Interacts with host RELA. Interacts with host PLSCR1; this interaction negatively regulates Tat transactivation activity by altering its subcellular distribution. In terms of processing, asymmetrical arginine methylation by host PRMT6 seems to diminish the transactivation capacity of Tat and affects the interaction with host CCNT1. Acetylation by EP300, CREBBP, GCN5L2/GCN5 and PCAF regulates the transactivation activity of Tat. EP300-mediated acetylation of Lys-50 promotes dissociation of Tat from the TAR RNA through the competitive binding to PCAF's bromodomain. In addition, the non-acetylated Tat's N-terminus can also interact with PCAF. PCAF-mediated acetylation of Lys-28 enhances Tat's binding to CCNT1. Lys-50 is deacetylated by SIRT1. Post-translationally, polyubiquitination by host MDM2 does not target Tat to degradation, but activates its transactivation function and fosters interaction with CCNT1 and TAR RNA. In terms of processing, phosphorylated by EIF2AK2 on serine and threonine residues adjacent to the basic region important for TAR RNA binding and function. Phosphorylation of Tat by EIF2AK2 is dependent on the prior activation of EIF2AK2 by dsRNA.

It is found in the host nucleus. It localises to the host nucleolus. The protein localises to the host cytoplasm. The protein resides in the secreted. In terms of biological role, transcriptional activator that increases RNA Pol II processivity, thereby increasing the level of full-length viral transcripts. Recognizes a hairpin structure at the 5'-LTR of the nascent viral mRNAs referred to as the transactivation responsive RNA element (TAR) and recruits the cyclin T1-CDK9 complex (P-TEFb complex) that will in turn hyperphosphorylate the RNA polymerase II to allow efficient elongation. The CDK9 component of P-TEFb and other Tat-activated kinases hyperphosphorylate the C-terminus of RNA Pol II that becomes stabilized and much more processive. Other factors such as HTATSF1/Tat-SF1, SUPT5H/SPT5, and HTATIP2 are also important for Tat's function. Besides its effect on RNA Pol II processivity, Tat induces chromatin remodeling of proviral genes by recruiting the histone acetyltransferases (HATs) CREBBP, EP300 and PCAF to the chromatin. This also contributes to the increase in proviral transcription rate, especially when the provirus integrates in transcriptionally silent region of the host genome. To ensure maximal activation of the LTR, Tat mediates nuclear translocation of NF-kappa-B by interacting with host RELA. Through its interaction with host TBP, Tat may also modulate transcription initiation. Tat can reactivate a latently infected cell by penetrating in it and transactivating its LTR promoter. In the cytoplasm, Tat is thought to act as a translational activator of HIV-1 mRNAs. Its function is as follows. Extracellular circulating Tat can be endocytosed by surrounding uninfected cells via the binding to several surface receptors such as CD26, CXCR4, heparan sulfate proteoglycans (HSPG) or LDLR. Neurons are rarely infected, but they internalize Tat via their LDLR. Through its interaction with nuclear HATs, Tat is potentially able to control the acetylation-dependent cellular gene expression. Modulates the expression of many cellular genes involved in cell survival, proliferation or in coding for cytokines or cytokine receptors. Tat plays a role in T-cell and neurons apoptosis. Tat induced neurotoxicity and apoptosis probably contribute to neuroAIDS. Circulating Tat also acts as a chemokine-like and/or growth factor-like molecule that binds to specific receptors on the surface of the cells, affecting many cellular pathways. In the vascular system, Tat binds to ITGAV/ITGB3 and ITGA5/ITGB1 integrins dimers at the surface of endothelial cells and competes with bFGF for heparin-binding sites, leading to an excess of soluble bFGF. In Homo sapiens (Human), this protein is Protein Tat.